Here is a 164-residue protein sequence, read N- to C-terminus: Protein phosphatase 1 regulatory subunit 14C (164 aa).

The span at 1–19 (MSVVTGGGEAAGGTSGGGA) shows a compositional bias: gly residues. The interval 1-72 (MSVVTGGGEA…QRRHQQGKVT (72 aa)) is disordered. N-acetylserine is present on Ser2. A Phosphoserine modification is found at Ser25. Arg27 is subject to Omega-N-methylarginine. Ser33 bears the Phosphoserine mark. The segment covering 50 to 62 (VATVAAAGQVQQQ) has biased composition (low complexity). Residue Thr72 is modified to Phosphothreonine; by ILK1.

It belongs to the PP1 inhibitor family. Has over 600-fold higher inhibitory activity when phosphorylated, creating a molecular switch for regulating the phosphorylation status of PPP1CA substrates and smooth muscle contraction. The main inhibitory site appears to be Thr-72.

The protein resides in the endomembrane system. Its function is as follows. Inhibitor of the PP1 regulatory subunit PPP1CA. This is Protein phosphatase 1 regulatory subunit 14C (Ppp1r14c) from Rattus norvegicus (Rat).